We begin with the raw amino-acid sequence, 89 residues long: Small ribosomal subunit protein uS19 (89 aa).

Belongs to the universal ribosomal protein uS19 family.

In terms of biological role, protein S19 forms a complex with S13 that binds strongly to the 16S ribosomal RNA. The chain is Small ribosomal subunit protein uS19 from Xanthomonas axonopodis pv. citri (strain 306).